The following is a 306-amino-acid chain: MHTLTIASRESALAMWQAEHIRDRLRELHPECKVNILGMTTRGDQILDVTLSKIGGKGLFVKELEVALAAGEADLAVHSMKDVPMELPPGFELAVIGEREDPRDAFVSNRYARLSDLPPGSVVGTSSLRREAQLRARYPHLTVKPLRGNVGTRLKKLDEGQFDAILLAAAGLKRLGLGARIKSLLSVEESIPAAGQGALGIEIRSGNTAVAAMLAPLNDPVTAACVRAERQVSRVLGGSCQVPLGAHASYKDGRLLLEGFVAKPDGSRFLVDRAEGDASDPEAVGQALADKLLAQGARAVLDALPA.

Cys-240 bears the S-(dipyrrolylmethanemethyl)cysteine mark.

Belongs to the HMBS family. In terms of assembly, monomer. It depends on dipyrromethane as a cofactor.

The catalysed reaction is 4 porphobilinogen + H2O = hydroxymethylbilane + 4 NH4(+). Its pathway is porphyrin-containing compound metabolism; protoporphyrin-IX biosynthesis; coproporphyrinogen-III from 5-aminolevulinate: step 2/4. Tetrapolymerization of the monopyrrole PBG into the hydroxymethylbilane pre-uroporphyrinogen in several discrete steps. This Thiobacillus denitrificans (strain ATCC 25259 / T1) protein is Porphobilinogen deaminase.